A 155-amino-acid polypeptide reads, in one-letter code: Small ribosomal subunit protein uS7c (155 aa).

It belongs to the universal ribosomal protein uS7 family. Part of the 30S ribosomal subunit.

The protein localises to the plastid. It localises to the chloroplast. Functionally, one of the primary rRNA binding proteins, it binds directly to 16S rRNA where it nucleates assembly of the head domain of the 30S subunit. In Allium textile (Textile onion), this protein is Small ribosomal subunit protein uS7c (rps7).